The sequence spans 440 residues: Enolase (440 aa).

Residue Gln163 coordinates (2R)-2-phosphoglycerate. Residue Glu205 is the Proton donor of the active site. Residues Asp242, Glu288, and Asp315 each coordinate Mg(2+). Lys340, Arg369, Ser370, and Lys391 together coordinate (2R)-2-phosphoglycerate. Lys340 (proton acceptor) is an active-site residue.

The protein belongs to the enolase family. Mg(2+) is required as a cofactor.

It localises to the cytoplasm. The protein localises to the secreted. The protein resides in the cell surface. The catalysed reaction is (2R)-2-phosphoglycerate = phosphoenolpyruvate + H2O. Its pathway is carbohydrate degradation; glycolysis; pyruvate from D-glyceraldehyde 3-phosphate: step 4/5. Functionally, catalyzes the reversible conversion of 2-phosphoglycerate (2-PG) into phosphoenolpyruvate (PEP). It is essential for the degradation of carbohydrates via glycolysis. The polypeptide is Enolase (Pediococcus pentosaceus (strain ATCC 25745 / CCUG 21536 / LMG 10740 / 183-1w)).